The sequence spans 984 residues: Ubiquitin conjugation factor E4 ufd-2 (984 aa).

Positions 909–982 constitute a U-box domain; sequence DVPEEFKDPI…QEWICQKRNS (74 aa).

The protein belongs to the ubiquitin conjugation factor E4 family. In terms of assembly, forms a complex composed of deubiquitinating enzyme atx-3, E4 ubiquitin-protein ligase ufd-2 and cdc-48.1; within the complex interacts with atx-3 and cdc-48.1 (via DDDLYN motif). Forms a complex composed of cdc-48.1, myosin chaperone unc-45, ubiquitin-protein ligases ufd-2 and chn-1; the complex targets myosin chaperone unc-45 for proteasomal degradation; within the complex interacts with cdc-48.1 (via DDDLYN motif), chn-1 and unc-45. Forms a complex composed of unc-45 and myosin heavy chain B unc-54; the complex targets unfolded unc-54 for proteasomal degradation; within the complex interacts with unc-45 (via TPR domain) and unc-54. Interacts with cdc-48.2 (via DDDLYN motif). In terms of tissue distribution, expressed in the germline (at protein level).

It is found in the cytoplasm. It localises to the nucleus membrane. The protein resides in the nucleus. Its subcellular location is the nucleolus. The catalysed reaction is S-ubiquitinyl-[E2 ubiquitin-conjugating enzyme]-L-cysteine + [acceptor protein]-L-lysine = [E2 ubiquitin-conjugating enzyme]-L-cysteine + N(6)-ubiquitinyl-[acceptor protein]-L-lysine.. Its pathway is protein modification; protein ubiquitination. Functionally, acts as an E4 ubiquitin ligase mediating the assembly of polyubiquitin chains on substrates ubiquitinated by another E3 ubiquitin ligase. The elongation of preexisting ubiquitin chains preferentially targets ubiquitin 'Lys-29' and 'Lys-48' residues. Also functions as an E3 ligase in conjunction with specific E1 and E2 ligases. Probably by regulating protein ubiquitination at DNA damage repair sites, coordinates DNA double-strand-break repair and apoptosis in the germline. Required for germline apoptosis in response to DNA damage downstream of cep-1. Involved in the resolution of DNA-repair sites by promoting the release of rad-51 from DNA damage foci. In association with protein-ligase chn-1, acts as an E3/E4 ligase to poly-ubiquitinate lysine residues in the UCS domain of myosin chaperone unc-45. By targeting myosin chaperone unc-45 for proteasomal degradation, regulates myosin assembly in body wall muscles in association with cdc-48.1 and chn-1. However, in a contrasting study, acts as an E3 ligase, independently of chn-1, to poly-ubiquitinate unc-45 without promoting unc-45 proteasomal degradation. Instead, uses unc-45 as an adapter protein to recruit and poly-ubiquitinate unfolded myosin heavy chain B unc-54. In Caenorhabditis elegans, this protein is Ubiquitin conjugation factor E4 ufd-2.